A 473-amino-acid chain; its full sequence is Suppressor of SWI4 1 homolog (473 aa).

The 264-residue stretch at proline 29–glutamate 292 folds into the Brix domain. Residues serine 238 and serine 240 each carry the phosphoserine modification. The disordered stretch occupies residues alanine 323 to alanine 473. Residues glutamine 324 to glutamine 334 show a composition bias toward low complexity. Residues arginine 335–aspartate 360 show a composition bias toward basic and acidic residues. A compositionally biased stretch (acidic residues) spans glycine 376–glutamate 388. Residues lysine 407–arginine 421 are compositionally biased toward basic residues. The span at arginine 422–histidine 444 shows a compositional bias: basic and acidic residues. Residue lysine 438 is modified to N6-acetyllysine. Positions glycine 464 to alanine 473 are enriched in basic residues.

It localises to the nucleus. The protein resides in the nucleolus. Its function is as follows. May have a role in cell growth. The chain is Suppressor of SWI4 1 homolog (PPAN) from Pongo abelii (Sumatran orangutan).